The sequence spans 1019 residues: Collagen alpha-2(VI) chain (1019 aa).

The signal sequence occupies residues 1–20 (MLQGTCSVLLLWGILGAIQA). The tract at residues 21-256 (QQQEVISPDT…YKVSCLEIPG (236 aa)) is nonhelical region. The VWFA 1 domain occupies 46–234 (HVYFVLDTSE…EIDQDTINRI (189 aa)). An N-linked (GlcNAc...) asparagine glycan is attached at N140. Positions 257 to 588 (PSGPKGYRGQ…GEPGPPGDPG (332 aa)) are disordered. A triple-helical region region spans residues 257-590 (PSGPKGYRGQ…PGPPGDPGLT (334 aa)). Residues 287-305 (DPGIEGPIGFPGPKGVPGF) are compositionally biased toward low complexity. The span at 306–318 (KGEKGEFGADGRK) shows a compositional bias: basic and acidic residues. The N-linked (GlcNAc...) asparagine glycan is linked to N327. Composition is skewed to basic and acidic residues over residues 365–377 (ERGD…DPGR) and 419–429 (PKGEPGRRGDP). 5 short sequence motifs (cell attachment site) span residues 366-368 (RGD), 426-428 (RGD), 489-491 (RGD), 498-500 (RGD), and 539-541 (RGD). The span at 524–557 (PGEKGEPGPRGPEGGRGDFGLKGEPGRKGEKGEP) shows a compositional bias: basic and acidic residues. Pro residues predominate over residues 559-569 (DPGPPGEPGPR). The interval 591–1019 (ECDVMTYVRE…FFDRFIRWIC (429 aa)) is nonhelical region. VWFA domains are found at residues 615 to 805 (DVVF…EDVL) and 833 to 1014 (DIVF…FDRF). N-linked (GlcNAc...) asparagine glycosylation occurs at N630. T701 is subject to Phosphothreonine. Phosphoserine is present on S705. N785, N897, and N954 each carry an N-linked (GlcNAc...) asparagine glycan.

The protein belongs to the type VI collagen family. Trimers composed of three different chains: alpha-1(VI), alpha-2(VI), and alpha-3(VI) or alpha-5(VI) or alpha-6(VI). Interacts with CSPG4. In terms of processing, prolines at the third position of the tripeptide repeating unit (G-X-Y) are hydroxylated in some or all of the chains.

The protein resides in the secreted. The protein localises to the extracellular space. It is found in the extracellular matrix. Its subcellular location is the membrane. Functionally, collagen VI acts as a cell-binding protein. The protein is Collagen alpha-2(VI) chain (COL6A2) of Homo sapiens (Human).